A 286-amino-acid polypeptide reads, in one-letter code: Large ribosomal subunit protein uL3 (286 aa).

Q152 carries the N5-methylglutamine modification. Over residues 246–265 (EAAAAAAAAEEQAAMEAAEA) the composition is skewed to low complexity. Residues 246–286 (EAAAAAAAAEEQAAMEAAEAAEAKTDTVAEAEAAEKKEGDA) are disordered. Residues 266-286 (AEAKTDTVAEAEAAEKKEGDA) are compositionally biased toward basic and acidic residues.

The protein belongs to the universal ribosomal protein uL3 family. As to quaternary structure, part of the 50S ribosomal subunit. Forms a cluster with proteins L14 and L19. Methylated by PrmB.

In terms of biological role, one of the primary rRNA binding proteins, it binds directly near the 3'-end of the 23S rRNA, where it nucleates assembly of the 50S subunit. This chain is Large ribosomal subunit protein uL3, found in Roseobacter denitrificans (strain ATCC 33942 / OCh 114) (Erythrobacter sp. (strain OCh 114)).